The sequence spans 493 residues: Glutamyl-tRNA(Gln) amidotransferase subunit A (493 aa).

Catalysis depends on charge relay system residues lysine 78 and serine 158. The Acyl-ester intermediate role is filled by serine 182.

It belongs to the amidase family. GatA subfamily. Heterotrimer of A, B and C subunits.

The enzyme catalyses L-glutamyl-tRNA(Gln) + L-glutamine + ATP + H2O = L-glutaminyl-tRNA(Gln) + L-glutamate + ADP + phosphate + H(+). In terms of biological role, allows the formation of correctly charged Gln-tRNA(Gln) through the transamidation of misacylated Glu-tRNA(Gln) in organisms which lack glutaminyl-tRNA synthetase. The reaction takes place in the presence of glutamine and ATP through an activated gamma-phospho-Glu-tRNA(Gln). In Azorhizobium caulinodans (strain ATCC 43989 / DSM 5975 / JCM 20966 / LMG 6465 / NBRC 14845 / NCIMB 13405 / ORS 571), this protein is Glutamyl-tRNA(Gln) amidotransferase subunit A.